The primary structure comprises 280 residues: Borealin (280 aa).

A compositionally biased stretch (basic residues) spans 140–153 (KVAAKKPSTARRTR). A disordered region spans residues 140–187 (KVAAKKPSTARRTRASVGNVANTSKRTSKRGRATPSASKQAETSLLGY).

The protein belongs to the borealin family. In terms of assembly, component of the CPC at least composed of survivin/birc5, incenp, cdca8/borealin and/or cdca9/dasra-A, and aurkb/aurora-B. Interacts with incenp (via N-terminus).

It localises to the nucleus. It is found in the chromosome. The protein resides in the centromere. Its subcellular location is the cytoplasm. The protein localises to the cytoskeleton. It localises to the spindle. Its function is as follows. Component of the chromosomal passenger complex (CPC), a complex that acts as a key regulator of mitosis. The CPC complex has essential functions at the centromere in ensuring correct chromosome alignment and segregation and is required for chromatin-induced microtubule stabilization and spindle assembly. Contributes to CPC function by facilitating loading of the CPC onto chromosomes. The chain is Borealin (cdca8) from Xenopus laevis (African clawed frog).